We begin with the raw amino-acid sequence, 389 residues long: Chalcone synthase A (389 aa).

Residue C164 is part of the active site.

The protein belongs to the thiolase-like superfamily. Chalcone/stilbene synthases family. Major expressed member of the gene family in various floral tissues and in seedlings treated with UV light. It is relatively low expressed in tissue culture material.

The enzyme catalyses (E)-4-coumaroyl-CoA + 3 malonyl-CoA + 3 H(+) = 2',4,4',6'-tetrahydroxychalcone + 3 CO2 + 4 CoA. Its pathway is secondary metabolite biosynthesis; flavonoid biosynthesis. The primary product of this enzyme is 4,2',4',6'-tetrahydroxychalcone (also termed naringenin-chalcone or chalcone) which can under specific conditions spontaneously isomerize into naringenin. This chain is Chalcone synthase A (CHSA), found in Petunia hybrida (Petunia).